Consider the following 125-residue polypeptide: Large ribosomal subunit protein uL30 (125 aa).

A large ribosomal subunit protein uL30 region spans residues 1–61 (MSKLKVKLLR…HLVGVAYRID (61 aa)). The segment at 62 to 125 (FSGDIPTVER…KNWKGEEVEL (64 aa)) is unknown.

Belongs to the universal ribosomal protein uL30 family. As to quaternary structure, part of the 50S ribosomal subunit.

The chain is Large ribosomal subunit protein uL30 from Aquifex aeolicus (strain VF5).